The chain runs to 243 residues: Vesicle-associated membrane protein-associated protein B (243 aa).

The residue at position 2 (alanine 2) is an N-acetylalanine. The Cytoplasmic portion of the chain corresponds to alanine 2–glutamate 218. Residues valine 7 to glutamate 124 enclose the MSP domain. Serine 146 is modified (phosphoserine). Residue lysine 147 forms a Glycyl lysine isopeptide (Lys-Gly) (interchain with G-Cter in SUMO1) linkage. Residue threonine 150 is modified to Phosphothreonine. A phosphoserine mark is found at serine 158 and serine 159. Positions leucine 161–leucine 196 form a coiled coil. Residues glutamate 185 to arginine 197 are compositionally biased toward basic and acidic residues. The tract at residues glutamate 185–glutamate 217 is disordered. Residue serine 206 is modified to Phosphoserine. The helical; Anchor for type IV membrane protein transmembrane segment at glycine 219–glycine 239 threads the bilayer.

This sequence belongs to the VAMP-associated protein (VAP) (TC 9.B.17) family. Homodimer, and heterodimer with VAPA. Interacts with VAMP1 and VAMP2. Interacts (via MSP domain) with ZFYVE27. Interacts with RMDN3. Interacts with KIF5A in a ZFYVE27-dependent manner. Interacts (via MSP domain) with STARD3 (via phospho-FFAT motif). Interacts with STARD3NL (via FFAT motif). Interacts with CERT1. Interacts with PLEKHA3 and SACM1L to form a ternary complex. Interacts with VPS13A (via FFAT motif). Interacts with RB1CC1 (via phosphorylated FFAT motif), MIGA2 (via phosphorylated FFAT motif), RMDN3 (via phosphorylated FFAT motif), OSBPL1A (via FFAT motif), KCNB1 (via phosphorylated FFAT motif) and KCNB2 (via phosphorylated FFAT motif). Interacts (via MSP domain) with WDR44 (via FFAT motif); the interactions connect the endoplasmic reticulum (ER) with the endosomal tubule.

The protein localises to the endoplasmic reticulum membrane. Endoplasmic reticulum (ER)-anchored protein that mediates the formation of contact sites between the ER and endosomes via interaction with FFAT motif-containing proteins such as STARD3 or WDR44. Interacts with STARD3 in a FFAT motif phosphorylation dependent manner. Via interaction with WDR44 participates in neosynthesized protein export. Participates in the endoplasmic reticulum unfolded protein response (UPR) by inducing ERN1/IRE1 activity. Involved in cellular calcium homeostasis regulation. In Sus scrofa (Pig), this protein is Vesicle-associated membrane protein-associated protein B.